The chain runs to 243 residues: Uridylate kinase (243 aa).

Residue 15-18 (KLSG) coordinates ATP. The tract at residues 23–28 (GEEGFG) is involved in allosteric activation by GTP. G57 is a UMP binding site. The ATP site is built by G58 and R62. UMP is bound by residues D77 and 138–145 (TGNPFFTT). Positions 165, 171, and 174 each coordinate ATP.

It belongs to the UMP kinase family. In terms of assembly, homohexamer.

The protein localises to the cytoplasm. The catalysed reaction is UMP + ATP = UDP + ADP. It participates in pyrimidine metabolism; CTP biosynthesis via de novo pathway; UDP from UMP (UMPK route): step 1/1. Allosterically activated by GTP. Inhibited by UTP. Its function is as follows. Catalyzes the reversible phosphorylation of UMP to UDP. This chain is Uridylate kinase, found in Aliivibrio fischeri (strain ATCC 700601 / ES114) (Vibrio fischeri).